A 665-amino-acid chain; its full sequence is UvrABC system protein B (665 aa).

One can recognise a Helicase ATP-binding domain in the interval 31-414; it reads DGVKGGEKAQ…EMEQTETVVQ (384 aa). 44 to 51 lines the ATP pocket; sequence GATGTGKT. The short motif at 97–120 is the Beta-hairpin element; sequence YYDYYQPEAYVPSSDTYIEKDSSI. Residues 435–601 form the Helicase C-terminal domain; sequence QIDDLVGEIH…TIIKEIRDLI (167 aa). The UVR domain maps to 629-664; that stretch reads ADLLMKLEREMKDAAKALDFETAATLRDTILELKAA.

It belongs to the UvrB family. As to quaternary structure, forms a heterotetramer with UvrA during the search for lesions. Interacts with UvrC in an incision complex.

The protein resides in the cytoplasm. Its function is as follows. The UvrABC repair system catalyzes the recognition and processing of DNA lesions. A damage recognition complex composed of 2 UvrA and 2 UvrB subunits scans DNA for abnormalities. Upon binding of the UvrA(2)B(2) complex to a putative damaged site, the DNA wraps around one UvrB monomer. DNA wrap is dependent on ATP binding by UvrB and probably causes local melting of the DNA helix, facilitating insertion of UvrB beta-hairpin between the DNA strands. Then UvrB probes one DNA strand for the presence of a lesion. If a lesion is found the UvrA subunits dissociate and the UvrB-DNA preincision complex is formed. This complex is subsequently bound by UvrC and the second UvrB is released. If no lesion is found, the DNA wraps around the other UvrB subunit that will check the other stand for damage. The chain is UvrABC system protein B from Enterococcus faecalis (strain ATCC 700802 / V583).